The chain runs to 469 residues: Glutamate--tRNA ligase (469 aa).

The 'HIGH' region signature appears at 9–19; the sequence is PSPTGFLHVGG. The short motif at 236–240 is the 'KMSKS' region element; the sequence is KLSKR. An ATP-binding site is contributed by Lys239.

It belongs to the class-I aminoacyl-tRNA synthetase family. Glutamate--tRNA ligase type 1 subfamily. In terms of assembly, monomer.

The protein localises to the cytoplasm. It catalyses the reaction tRNA(Glu) + L-glutamate + ATP = L-glutamyl-tRNA(Glu) + AMP + diphosphate. Its function is as follows. Catalyzes the attachment of glutamate to tRNA(Glu) in a two-step reaction: glutamate is first activated by ATP to form Glu-AMP and then transferred to the acceptor end of tRNA(Glu). In Shewanella frigidimarina (strain NCIMB 400), this protein is Glutamate--tRNA ligase.